Reading from the N-terminus, the 50-residue chain is Defensin-like protein 1 (50 aa).

4 disulfides stabilise this stretch: Cys-3-Cys-50, Cys-14-Cys-35, Cys-20-Cys-44, and Cys-24-Cys-46.

Belongs to the DEFL family.

Its subcellular location is the secreted. Possesses antimicrobial activity sensitive to inorganic cations. Has no inhibitory effect on insect gut alpha-amylase. Induces potential changes in fungal membranes and increased K+ efflux and Ca(2+) uptake. Interacts with sphingolipids and ergosterols found in fungal plasma membranes. The polypeptide is Defensin-like protein 1 (Dahlia merckii (Bedding dahlia)).